Here is a 503-residue protein sequence, read N- to C-terminus: Zinc-regulated transporter 3 (503 aa).

Helical transmembrane passes span 8-28 (LLFS…VPLL), 42-62 (LVNY…LYML), and 75-95 (FPGL…VHAF). A disordered region spans residues 112–171 (GSHIHSKSHSHSHSHSHADSHSNFSNDHDLENAPSEHGYATSSSSVSENDPLITKDSDRP). Positions 115 to 126 (IHSKSHSHSHSH) are enriched in basic residues. Residues 127–142 (SHADSHSNFSNDHDLE) are compositionally biased toward basic and acidic residues. Phosphoserine is present on residues Ser-178 and Ser-188. Disordered stretches follow at residues 221-244 (QSER…DKDH) and 274-295 (HHSS…FSSP). The span at 280–295 (PENYGSNQLSHSFSSP) shows a compositional bias: polar residues. 5 consecutive transmembrane segments (helical) span residues 336-356 (IGMQ…FIIF), 371-391 (IFLS…LPFY), 398-418 (WVAI…GALI), 438-458 (LLSV…QTGI), and 482-502 (GTTC…SALF).

The protein belongs to the ZIP transporter (TC 2.A.5) family.

It localises to the vacuole membrane. In terms of biological role, transports zinc from storage in the vacuole to the cytoplasm. The chain is Zinc-regulated transporter 3 (ZRT3) from Saccharomyces cerevisiae (strain ATCC 204508 / S288c) (Baker's yeast).